Here is a 75-residue protein sequence, read N- to C-terminus: Cytochrome c oxidase subunit 6C (75 aa).

Residues 1-13 (MASSALAKPQMRG) are Mitochondrial matrix-facing. Residues 14–54 (LLARRLRIHIVGAFVVSLGVAAFYKYAVAEPRKKAYADFYR) traverse the membrane as a helical segment. Over 55 to 75 (NYDSVKYFEEMRKAGVFQSVK) the chain is Mitochondrial intermembrane.

This sequence belongs to the cytochrome c oxidase subunit 6c family. In terms of assembly, component of the cytochrome c oxidase (complex IV, CIV), a multisubunit enzyme composed of 14 subunits. The complex is composed of a catalytic core of 3 subunits MT-CO1, MT-CO2 and MT-CO3, encoded in the mitochondrial DNA, and 11 supernumerary subunits COX4I, COX5A, COX5B, COX6A, COX6B, COX6C, COX7A, COX7B, COX7C, COX8 and NDUFA4, which are encoded in the nuclear genome. The complex exists as a monomer or a dimer and forms supercomplexes (SCs) in the inner mitochondrial membrane with NADH-ubiquinone oxidoreductase (complex I, CI) and ubiquinol-cytochrome c oxidoreductase (cytochrome b-c1 complex, complex III, CIII), resulting in different assemblies (supercomplex SCI(1)III(2)IV(1) and megacomplex MCI(2)III(2)IV(2)).

The protein resides in the mitochondrion inner membrane. It functions in the pathway energy metabolism; oxidative phosphorylation. Functionally, component of the cytochrome c oxidase, the last enzyme in the mitochondrial electron transport chain which drives oxidative phosphorylation. The respiratory chain contains 3 multisubunit complexes succinate dehydrogenase (complex II, CII), ubiquinol-cytochrome c oxidoreductase (cytochrome b-c1 complex, complex III, CIII) and cytochrome c oxidase (complex IV, CIV), that cooperate to transfer electrons derived from NADH and succinate to molecular oxygen, creating an electrochemical gradient over the inner membrane that drives transmembrane transport and the ATP synthase. Cytochrome c oxidase is the component of the respiratory chain that catalyzes the reduction of oxygen to water. Electrons originating from reduced cytochrome c in the intermembrane space (IMS) are transferred via the dinuclear copper A center (CU(A)) of subunit 2 and heme A of subunit 1 to the active site in subunit 1, a binuclear center (BNC) formed by heme A3 and copper B (CU(B)). The BNC reduces molecular oxygen to 2 water molecules using 4 electrons from cytochrome c in the IMS and 4 protons from the mitochondrial matrix. This Nycticebus coucang (Slow loris) protein is Cytochrome c oxidase subunit 6C (COX6C).